The sequence spans 313 residues: uncharacterized protein (313 aa).

2 disordered regions span residues 24-53 and 190-291; these read EEGE…PTPN and TALS…PCAR. The span at 211 to 229 shows a compositional bias: polar residues; that stretch reads TQNYVLKLQLSSPNSQPMS. Low complexity predominate over residues 239 to 260; that stretch reads SCSSSNCSSSSSSSACSSVSIS. The span at 261–284 shows a compositional bias: polar residues; the sequence is DPNNITAYETNNVNPQFPSNQPLD.

This is an uncharacterized protein from Saccharomyces cerevisiae (strain ATCC 204508 / S288c) (Baker's yeast).